Consider the following 144-residue polypeptide: Protein WAP-3 (144 aa).

A signal peptide spans Met-1–Ala-21. Positions Arg-28–Pro-49 are disordered. Gly-34 is a region of interest (8 X 6 AA approximate tandem repeats). 8 tandem repeats follow at residues Gly-34–Glu-39, Gly-40–Glu-45, Gly-46–Lys-51, Gly-58–Lys-63, Gly-64–Glu-69, Gly-70–Lys-75, Ala-76–Lys-81, and Val-82–Lys-87. Positions Gly-64 to Pro-85 are disordered. Residues Leu-97 to Arg-144 enclose the WAP domain. Disulfide bonds link Cys-104–Cys-132, Cys-110–Cys-136, Cys-119–Cys-131, and Cys-125–Cys-140.

Large intestine (relatively low levels).

This is Protein WAP-3 from Sus scrofa (Pig).